Reading from the N-terminus, the 226-residue chain is 2,3-bisphosphoglycerate-dependent phosphoglycerate mutase (226 aa).

Residues 8–15 (RHGQSVWN), 21–22 (TG), Arg-58, 109–112 (ERMY), Lys-120, 136–137 (RR), and 180–181 (GN) each bind substrate. The active-site Tele-phosphohistidine intermediate is the His-9. Glu-109 serves as the catalytic Proton donor/acceptor.

Belongs to the phosphoglycerate mutase family. BPG-dependent PGAM subfamily.

The enzyme catalyses (2R)-2-phosphoglycerate = (2R)-3-phosphoglycerate. The protein operates within carbohydrate degradation; glycolysis; pyruvate from D-glyceraldehyde 3-phosphate: step 3/5. Catalyzes the interconversion of 2-phosphoglycerate and 3-phosphoglycerate. This is 2,3-bisphosphoglycerate-dependent phosphoglycerate mutase from Chlamydia trachomatis serovar L2 (strain ATCC VR-902B / DSM 19102 / 434/Bu).